Reading from the N-terminus, the 450-residue chain is Tubulin alpha-1 chain (450 aa).

GTP is bound by residues Gln11, Glu71, Gly144, Thr145, Thr179, Asn206, and Asn228. Glu71 serves as a coordination point for Mg(2+). Glu254 is an active-site residue.

It belongs to the tubulin family. As to quaternary structure, dimer of alpha and beta chains. A typical microtubule is a hollow water-filled tube with an outer diameter of 25 nm and an inner diameter of 15 nM. Alpha-beta heterodimers associate head-to-tail to form protofilaments running lengthwise along the microtubule wall with the beta-tubulin subunit facing the microtubule plus end conferring a structural polarity. Microtubules usually have 13 protofilaments but different protofilament numbers can be found in some organisms and specialized cells. Mg(2+) is required as a cofactor. Post-translationally, undergoes a tyrosination/detyrosination cycle, the cyclic removal and re-addition of a C-terminal tyrosine residue by the enzymes tubulin tyrosine carboxypeptidase (TTCP) and tubulin tyrosine ligase (TTL), respectively.

The protein resides in the cytoplasm. The protein localises to the cytoskeleton. It carries out the reaction GTP + H2O = GDP + phosphate + H(+). Functionally, tubulin is the major constituent of microtubules, a cylinder consisting of laterally associated linear protofilaments composed of alpha- and beta-tubulin heterodimers. Microtubules grow by the addition of GTP-tubulin dimers to the microtubule end, where a stabilizing cap forms. Below the cap, tubulin dimers are in GDP-bound state, owing to GTPase activity of alpha-tubulin. The polypeptide is Tubulin alpha-1 chain (TUBA1) (Oryza sativa subsp. japonica (Rice)).